Consider the following 273-residue polypeptide: HMP-PP phosphatase (273 aa).

Residue D8 is the Nucleophile of the active site. Mg(2+)-binding residues include D8, D10, and D212.

The protein belongs to the HAD-like hydrolase superfamily. Cof family. Mg(2+) serves as cofactor.

It carries out the reaction 4-amino-2-methyl-5-(diphosphooxymethyl)pyrimidine + H2O = 4-amino-2-methyl-5-(phosphooxymethyl)pyrimidine + phosphate + H(+). Its function is as follows. Catalyzes the hydrolysis of 4-amino-2-methyl-5-hydroxymethylpyrimidine pyrophosphate (HMP-PP) to 4-amino-2-methyl-5-hydroxymethylpyrimidine phosphate (HMP-P). This Yersinia pseudotuberculosis serotype IB (strain PB1/+) protein is HMP-PP phosphatase.